We begin with the raw amino-acid sequence, 404 residues long: AT-hook motif nuclear-localized protein 6 (404 aa).

A disordered region spans residues 40–112 (TTVVTPLPPP…TPISSSIPLS (73 aa)). Pro residues predominate over residues 45-55 (PLPPPPAPSSA). Residues 56–70 (PVPTTVTPGSATAST) are compositionally biased toward low complexity. Positions 76–84 (KKKRGRPRK) match the Bipartite nuclear localization signal motif. The a.T hook DNA-binding region spans 76-88 (KKKRGRPRKYAPD). Residues 98–112 (PTLSPTPISSSIPLS) show a composition bias toward low complexity. In terms of domain architecture, PPC spans 157–299 (GANFTTHQFT…RVMEAFAPPQ (143 aa)). The tract at residues 365–404 (AYHGYGNMNTGTTHKEEHEDEDGGDDDDDSGDTRSQSHSG) is disordered. The span at 382 to 394 (HEDEDGGDDDDDS) shows a compositional bias: acidic residues.

It localises to the nucleus. Transcription factor that specifically binds AT-rich DNA sequences related to the nuclear matrix attachment regions (MARs). This is AT-hook motif nuclear-localized protein 6 from Arabidopsis thaliana (Mouse-ear cress).